Reading from the N-terminus, the 358-residue chain is Methylthioribose-1-phosphate isomerase (358 aa).

Substrate is bound by residues 54–56, R96, and Q205; that span reads RGA. The Proton donor role is filled by D246. 256 to 257 is a binding site for substrate; sequence NK.

Belongs to the eIF-2B alpha/beta/delta subunits family. MtnA subfamily.

It catalyses the reaction 5-(methylsulfanyl)-alpha-D-ribose 1-phosphate = 5-(methylsulfanyl)-D-ribulose 1-phosphate. It functions in the pathway amino-acid biosynthesis; L-methionine biosynthesis via salvage pathway; L-methionine from S-methyl-5-thio-alpha-D-ribose 1-phosphate: step 1/6. Functionally, catalyzes the interconversion of methylthioribose-1-phosphate (MTR-1-P) into methylthioribulose-1-phosphate (MTRu-1-P). The polypeptide is Methylthioribose-1-phosphate isomerase (Pseudomonas savastanoi pv. phaseolicola (strain 1448A / Race 6) (Pseudomonas syringae pv. phaseolicola (strain 1448A / Race 6))).